Reading from the N-terminus, the 486-residue chain is Protein nucleotidyltransferase YdiU (486 aa).

Gly90, Gly92, Arg93, Lys113, Asp125, Gly126, Arg176, and Arg183 together coordinate ATP. Asp252 (proton acceptor) is an active-site residue. Mg(2+)-binding residues include Asn253 and Asp262. Asp262 is a binding site for ATP.

It belongs to the SELO family. Mg(2+) serves as cofactor. Mn(2+) is required as a cofactor.

It catalyses the reaction L-seryl-[protein] + ATP = 3-O-(5'-adenylyl)-L-seryl-[protein] + diphosphate. It carries out the reaction L-threonyl-[protein] + ATP = 3-O-(5'-adenylyl)-L-threonyl-[protein] + diphosphate. The catalysed reaction is L-tyrosyl-[protein] + ATP = O-(5'-adenylyl)-L-tyrosyl-[protein] + diphosphate. The enzyme catalyses L-histidyl-[protein] + UTP = N(tele)-(5'-uridylyl)-L-histidyl-[protein] + diphosphate. It catalyses the reaction L-seryl-[protein] + UTP = O-(5'-uridylyl)-L-seryl-[protein] + diphosphate. It carries out the reaction L-tyrosyl-[protein] + UTP = O-(5'-uridylyl)-L-tyrosyl-[protein] + diphosphate. Functionally, nucleotidyltransferase involved in the post-translational modification of proteins. It can catalyze the addition of adenosine monophosphate (AMP) or uridine monophosphate (UMP) to a protein, resulting in modifications known as AMPylation and UMPylation. This is Protein nucleotidyltransferase YdiU from Stutzerimonas stutzeri (strain A1501) (Pseudomonas stutzeri).